The following is a 407-amino-acid chain: NADH-quinone oxidoreductase subunit D (407 aa).

This sequence belongs to the complex I 49 kDa subunit family. In terms of assembly, NDH-1 is composed of 14 different subunits. Subunits NuoB, C, D, E, F, and G constitute the peripheral sector of the complex.

It localises to the cell inner membrane. The catalysed reaction is a quinone + NADH + 5 H(+)(in) = a quinol + NAD(+) + 4 H(+)(out). In terms of biological role, NDH-1 shuttles electrons from NADH, via FMN and iron-sulfur (Fe-S) centers, to quinones in the respiratory chain. The immediate electron acceptor for the enzyme in this species is believed to be ubiquinone. Couples the redox reaction to proton translocation (for every two electrons transferred, four hydrogen ions are translocated across the cytoplasmic membrane), and thus conserves the redox energy in a proton gradient. This chain is NADH-quinone oxidoreductase subunit D, found in Roseobacter denitrificans (strain ATCC 33942 / OCh 114) (Erythrobacter sp. (strain OCh 114)).